The following is a 333-amino-acid chain: 4-hydroxyproline 2-epimerase (333 aa).

Cys-90 (proton acceptor) is an active-site residue. Residues 91 to 92, His-223, and Asp-249 each bind substrate; that span reads GH. Cys-253 acts as the Proton donor in catalysis. Position 254–255 (254–255) interacts with substrate; sequence GT.

It belongs to the proline racemase family.

It carries out the reaction trans-4-hydroxy-L-proline = cis-4-hydroxy-D-proline. Functionally, catalyzes the epimerization of trans-4-hydroxy-L-proline (t4LHyp) to cis-4-hydroxy-D-proline (c4DHyp). Is likely involved in a degradation pathway that converts t4LHyp to alpha-ketoglutarate. Displays no proline racemase activity. The chain is 4-hydroxyproline 2-epimerase from Shewanella loihica (strain ATCC BAA-1088 / PV-4).